The primary structure comprises 447 residues: Tektin-4 (447 aa).

Coiled coils occupy residues 69–144 and 304–423; these read ADRD…ALDA and FGRR…TNSL. A compositionally biased stretch (basic and acidic residues) spans 72-81; sequence DQSERQRHES. A disordered region spans residues 72-104; that stretch reads DQSERQRHESQQLAAETEALAQRTQQDSTRKVG. The span at 82–97 shows a compositional bias: low complexity; it reads QQLAAETEALAQRTQQ.

This sequence belongs to the tektin family. Microtubule inner protein component of sperm flagellar doublet microtubules. Ubiquitinated, leading to its degradation. Deubiquitinated by USP16, promoting its stability. In terms of tissue distribution, expressed in trachea multiciliated cells.

The protein localises to the cytoplasm. The protein resides in the cytoskeleton. It is found in the cilium axoneme. It localises to the flagellum axoneme. Functionally, microtubule inner protein (MIP) part of the dynein-decorated doublet microtubules (DMTs) in cilia and flagellar axoneme. Forms filamentous polymers in the walls of ciliary and flagellar microtubules. Contributes to normal sperm motility. This is Tektin-4 (TEKT4) from Bos taurus (Bovine).